Reading from the N-terminus, the 220-residue chain is Ribose-5-phosphate isomerase A (220 aa).

Substrate contacts are provided by residues 28–31 (TGST), 81–84 (DGAD), and 94–97 (KGGG). The Proton acceptor role is filled by Glu103. Lys121 is a binding site for substrate.

Belongs to the ribose 5-phosphate isomerase family. Homodimer.

The enzyme catalyses aldehydo-D-ribose 5-phosphate = D-ribulose 5-phosphate. The protein operates within carbohydrate degradation; pentose phosphate pathway; D-ribose 5-phosphate from D-ribulose 5-phosphate (non-oxidative stage): step 1/1. Functionally, catalyzes the reversible conversion of ribose-5-phosphate to ribulose 5-phosphate. This chain is Ribose-5-phosphate isomerase A, found in Shewanella putrefaciens (strain CN-32 / ATCC BAA-453).